A 473-amino-acid polypeptide reads, in one-letter code: Glutamate--tRNA ligase 1 (473 aa).

The 'HIGH' region motif lies at proline 11–glycine 21. Residues arginine 111–glutamate 132 are disordered. Positions lysine 240–arginine 244 match the 'KMSKS' region motif. Lysine 243 lines the ATP pocket.

Belongs to the class-I aminoacyl-tRNA synthetase family. Glutamate--tRNA ligase type 1 subfamily. As to quaternary structure, monomer.

Its subcellular location is the cytoplasm. It carries out the reaction tRNA(Glu) + L-glutamate + ATP = L-glutamyl-tRNA(Glu) + AMP + diphosphate. Functionally, catalyzes the attachment of glutamate to tRNA(Glu) in a two-step reaction: glutamate is first activated by ATP to form Glu-AMP and then transferred to the acceptor end of tRNA(Glu). The chain is Glutamate--tRNA ligase 1 from Beijerinckia indica subsp. indica (strain ATCC 9039 / DSM 1715 / NCIMB 8712).